The primary structure comprises 555 residues: Urocanate hydratase (555 aa).

NAD(+)-binding positions include 52–53 (GG), Gln130, 176–178 (GMG), Glu196, Arg201, 242–243 (NA), 263–267 (QTSAH), 273–274 (YL), and Tyr322. The active site involves Cys410. Position 492 (Gly492) interacts with NAD(+).

It belongs to the urocanase family. NAD(+) is required as a cofactor.

The protein localises to the cytoplasm. The enzyme catalyses 4-imidazolone-5-propanoate = trans-urocanate + H2O. The protein operates within amino-acid degradation; L-histidine degradation into L-glutamate; N-formimidoyl-L-glutamate from L-histidine: step 2/3. Its function is as follows. Catalyzes the conversion of urocanate to 4-imidazolone-5-propionate. The sequence is that of Urocanate hydratase from Shewanella baltica (strain OS223).